The sequence spans 752 residues: MSSRTVLAPGNDRNSDTHGTLGSGRSSDKGPSWSSRSLGARCRNSIASCPEEQPHVGNYRLLRTIGKGNFAKVKLARHILTGREVAIKIIDKTQLNPSSLQKLFREVRIMKGLNHPNIVKLFEVIETEKTLYLVMEYASAGEVFDYLVSHGRMKEKEARAKFRQIVSAVHYCHQKNIVHRDLKAENLLLDAEANIKIADFGFSNEFTLGSKLDTFCGSPPYAAPELFQGKKYDGPEVDIWSLGVILYTLVSGSLPFDGHNLKELRERVLRGKYRVPFYMSTDCESILRRFLVLNPAKRCTLEQIMKDKWINIGYEGEELKPYTEPEEDFGDTKRIEVMVGMGYTREEIKESLTSQKYNEVTATYLLLGRKTEEGGDRGAPGLALARVRAPSDTTNGTSSSKGTSHSKGQRSSSSTYHRQRRHSDFCGPSPAPLHPKRSPTSTGEAELKEERLPGRKASCSTAGSGSRGLPPSSPMVSSAHNPNKAEIPERRKDSTSTPNNLPPSMMTRRNTYVCTERPGAERPSLLPNGKENSSGTPRVPPASPSSHSLAPPSGERSRLARGSTIRSTFHGGQVRDRRAGGGGGGGVQNGPPASPTLAHEAAPLPAGRPRPTTNLFTKLTSKLTRRVADEPERIGGPEVTSCHLPWDQTETAPRLLRFPWSVKLTSSRPPEALMAALRQATAAARCRCRQPQPFLLACLHGGAGGPEPLSHFEVEVCQLPRPGLRGVLFRRVAGTALAFRTLVTRISNDLEL.

Residues 1 to 36 (MSSRTVLAPGNDRNSDTHGTLGSGRSSDKGPSWSSR) form a disordered region. One can recognise a Protein kinase domain in the interval 59–310 (YRLLRTIGKG…LEQIMKDKWI (252 aa)). ATP is bound by residues 65–73 (IGKGNFAKV) and Lys-88. The active-site Proton acceptor is Asp-181. Thr-214 carries the post-translational modification Phosphothreonine; by LKB1. The UBA domain occupies 324–368 (EPEEDFGDTKRIEVMVGMGYTREEIKESLTSQKYNEVTATYLLLG). Residues 385-614 (ARVRAPSDTT…PAGRPRPTTN (230 aa)) are disordered. Residues 391-406 (SDTTNGTSSSKGTSHS) show a composition bias toward low complexity. Residues Ser-423 and Ser-543 each carry the phosphoserine modification. A compositionally biased stretch (low complexity) spans 544 to 553 (PSSHSLAPPS). The region spanning 703 to 752 (AGGPEPLSHFEVEVCQLPRPGLRGVLFRRVAGTALAFRTLVTRISNDLEL) is the KA1 domain.

Belongs to the protein kinase superfamily. CAMK Ser/Thr protein kinase family. SNF1 subfamily. As to quaternary structure, interacts with MAPT/TAU. Interacts with gamma-tubulin. Interacts with ODF2. Interacts with USP9X. Interacts with YWHAQ. Interacts with NLRP3; promoting NLRP3 recruitment to microtubule organizing center (MTOC). Mg(2+) is required as a cofactor. Ubiquitinated with 'Lys-29'- and 'Lys-33'-linked polyubiquitins which appear to impede LKB1-mediated phosphorylation. Deubiquitinated by USP9X. In terms of processing, phosphorylated at Thr-214 by STK11/LKB1 in complex with STE20-related adapter-alpha (STRADA) pseudo kinase and CAB39. Phosphorylated throughout the cell cycle. In terms of tissue distribution, ubiquitous. Isoform 2 is brain-specific. Expressed at highest levels in brain and testis. Also expressed in heart, lung, liver, muscle, kidney and spleen.

It is found in the cytoplasm. It localises to the cytoskeleton. The protein localises to the microtubule organizing center. The protein resides in the centrosome. Its subcellular location is the cilium basal body. It is found in the cilium axoneme. It localises to the cell projection. The protein localises to the dendrite. It carries out the reaction L-seryl-[protein] + ATP = O-phospho-L-seryl-[protein] + ADP + H(+). The catalysed reaction is L-threonyl-[protein] + ATP = O-phospho-L-threonyl-[protein] + ADP + H(+). With respect to regulation, activated by phosphorylation on Thr-214. Functionally, serine/threonine-protein kinase. Phosphorylates the microtubule-associated protein MAPT/TAU. Also phosphorylates the microtubule-associated proteins MAP2 and MAP4. Involved in regulation of the microtubule network, causing reorganization of microtubules into bundles. Required for the initiation of axoneme extension during cilium assembly. Regulates the centrosomal location of ODF2 and phosphorylates ODF2 in vitro. Plays a role in cell cycle progression, specifically in the G1/S checkpoint. Reduces neuronal cell survival. Plays a role in energy homeostasis by regulating satiety and metabolic rate. Promotes adipogenesis by activating JNK1 and inhibiting the p38MAPK pathway, and triggers apoptosis by activating the JNK1 pathway. Phosphorylates mTORC1 complex member RPTOR and acts as a negative regulator of the mTORC1 complex, probably due to disruption of the interaction between phosphorylated RPTOR and the RRAGA/RRAGC heterodimer which is required for mTORC1 activation. Involved in NLRP3 positioning along microtubules by mediating NLRP3 recruitment to microtubule organizing center (MTOC) upon inflammasome activation. The sequence is that of MAP/microtubule affinity-regulating kinase 4 from Homo sapiens (Human).